Here is a 341-residue protein sequence, read N- to C-terminus: G2/mitotic-specific cyclin C13-1 (341 aa).

It belongs to the cyclin family. Cyclin AB subfamily.

Functionally, essential for the control of the cell cycle at the G2/M (mitosis) transition. Interacts with the CDC2 and CDK2 protein kinases to form MPF. G2/M cyclins accumulate steadily during G2 and are abruptly destroyed at mitosis. This is G2/mitotic-specific cyclin C13-1 from Daucus carota (Wild carrot).